The chain runs to 198 residues: ADP-ribosylation factor-like protein 3 (198 aa).

An N-acetylmethionine modification is found at Met1. 24–31 provides a ligand contact to GTP; the sequence is GLDNAGKT. Residue Lys50 forms a Glycyl lysine isopeptide (Lys-Gly) (interchain with G-Cter in ubiquitin) linkage. Residues 74–78 and 133–136 contribute to the GTP site; these read DVGGQ and NKQD.

The protein belongs to the small GTPase superfamily. Arf family. In terms of assembly, interacts with SYS1 and SLO1.

The protein localises to the golgi apparatus. Involved in the targeting of ARL1 to the Golgi. Can bind and hydrolyze GTP. The protein is ADP-ribosylation factor-like protein 3 (ARL3) of Saccharomyces cerevisiae (strain ATCC 204508 / S288c) (Baker's yeast).